The primary structure comprises 497 residues: Zinc finger protein ZIC 2-B (497 aa).

Disordered stretches follow at residues 58–107 and 143–180; these read HMGA…TSQA and SAAA…PQGH. Residues 66 to 88 show a composition bias toward gly residues; that stretch reads PGGGSGGGSGGGGGAGPNGGAGA. Positions 97-107 are enriched in polar residues; that stretch reads PGQTSAFTSQA. The span at 161–171 shows a compositional bias: basic residues; the sequence is LHHHPHHHHQL. Residues 273–308 form a C2H2-type 1; atypical zinc finger; it reads LICKWIDPEQLNNPKKSCNKTFSTMHELVTHMSVEH. Residues 317 to 344 form a C2H2-type 2; atypical zinc finger; it reads HICFWEECAREGKPFKAKYKLVNHIRVH. 3 consecutive C2H2-type zinc fingers follow at residues 350–374, 380–404, and 410–432; these read FPCP…KRTH, FQCE…MHVH, and YLCK…MKVH. The interval 423 to 473 is disordered; it reads SSLRKHMKVHESSPQGSESSPAASSGYESSTPPGLVSPNSETQNPNLSPAA. The span at 434–452 shows a compositional bias: low complexity; sequence SSPQGSESSPAASSGYESS. The segment covering 459–469 has biased composition (polar residues); it reads SPNSETQNPNL.

This sequence belongs to the GLI C2H2-type zinc-finger protein family.

The protein localises to the nucleus. It localises to the cytoplasm. In terms of biological role, transcriptional repressor that inhibits neurogenesis and induces neural and neural crest differentiation. Regulates anteroposterior patterning in early development by inhibiting expression of the nodal genes through the inhibition of vegt. Required for gastrulation movements and for proper anterior neural and axial development. May also act as a transcriptional activator. May bind to the minimal GLI-consensus sequence 5'-TGGGTGGTC-3'. This Xenopus laevis (African clawed frog) protein is Zinc finger protein ZIC 2-B (zic2-b).